Consider the following 493-residue polypeptide: Cytochrome P450 monooxygenase esdpG (493 aa).

A helical transmembrane segment spans residues 10 to 30 (VLGVTWLSALFTLGSLSVFWL). Residue Cys-434 participates in heme binding.

It belongs to the cytochrome P450 family. The cofactor is heme.

The protein localises to the membrane. The protein operates within secondary metabolite biosynthesis; terpenoid biosynthesis. Its function is as follows. Cytochrome P450 monooxygenasee; part of the cluster that mediates the biosynthesis of shearones, diterpenoid pyrones (DPs) which are structurally diverse meroterpenoids consisting of a diterpene linked by a pyrone, and which may exhibit a range of bioactivities. Whitin the pathway, esdpG takes part in the molecular scaffold modification via the hydroxylation at C-11 and C-12 and can transform shearone A into shearone C and shearone B into shearone D. The molecular scaffold is commonly biosynthesized by a series of enzymes including the non-reducing polyketide synthase (NR-PKS) esdpA that generates an alpha-pyrone; the prenyltransferase esdpC that attaches a geranylgeranyl pyrophosphate (GGPP) produced by the GGPP synthase (GGPPS) esdpD onto the pyrone unit; the FAD-dependent monooxygenase esdpE that converts an olefin on the diterpene unit into an epoxide; and the terpene cyclase esdpB that catalyzes the cyclization reactions to give the molecular backbone shearone A. In the modification steps, esdpF oxidizes the hydroxy group to a ketone at C-3 and esdpG then attaches hydroxy groups at both C-11 and C-12. After that, esdpI hydroxylates at C-20 and esdpH hydroxylates at C-6'. The ether bridge is generated by nucleophilic attack of the hydroxy group at C-20 to the carbonyl carbon at C-3. EsdpH can also functions prior to esdpI. The different combinations of these modification enzymes lead to the production of diverse shearone derivatives, shearone I being the end product of the pathway. The alpha-ketoglutarate-dependent dioxygenase esdpJ seems not to be involved in this pathway. The polypeptide is Cytochrome P450 monooxygenase esdpG (Penicillium shearii (Eupenicillium shearii)).